Reading from the N-terminus, the 633-residue chain is Extracellular metalloproteinase 5 (633 aa).

A signal peptide spans 1-21 (MHGLLLAAAGLLSLPLHVVAH). Positions 22–245 (PQPSTSLAGR…HNVVDYVSHA (224 aa)) are excised as a propeptide. Asn285 carries an N-linked (GlcNAc...) asparagine glycan. His428 is a Zn(2+) binding site. Glu429 is an active-site residue. A Zn(2+)-binding site is contributed by His432. 2 N-linked (GlcNAc...) asparagine glycosylation sites follow: Asn592 and Asn621.

This sequence belongs to the peptidase M36 family. The cofactor is Zn(2+).

It localises to the secreted. Its function is as follows. Secreted metalloproteinase probably acting as a virulence factor. This chain is Extracellular metalloproteinase 5 (MEP5), found in Trichophyton rubrum (Athlete's foot fungus).